Reading from the N-terminus, the 1102-residue chain is Carbamoyl phosphate synthase large chain (1102 aa).

Positions 1–402 (MPKRTDLKSV…ALQKALRSLE (402 aa)) are carboxyphosphate synthetic domain. Residues arginine 129, arginine 169, glycine 175, glycine 176, glutamate 208, isoleucine 210, glutamate 215, glycine 241, valine 242, histidine 243, glutamine 285, and glutamate 299 each coordinate ATP. Residues 133–328 (KGVVERCGAE…IAKIATKLSL (196 aa)) form the ATP-grasp 1 domain. Positions 285, 299, and 301 each coordinate Mg(2+). Glutamine 285, glutamate 299, and asparagine 301 together coordinate Mn(2+). Positions 403 to 546 (QKGSQLDFSS…YHYSSYDEED (144 aa)) are oligomerization domain. The segment at 547 to 950 (EVGLHAKPSV…AFAKSQAAAN (404 aa)) is carbamoyl phosphate synthetic domain. In terms of domain architecture, ATP-grasp 2 spans 677–868 (ARVLDEAGLT…MAKAAALIGT (192 aa)). ATP-binding residues include arginine 713, arginine 752, leucine 754, glutamate 759, glycine 784, isoleucine 785, histidine 786, serine 787, glutamine 827, and glutamate 839. Mg(2+) is bound by residues glutamine 827, glutamate 839, and asparagine 841. Mn(2+) is bound by residues glutamine 827, glutamate 839, and asparagine 841. The 146-residue stretch at 951 to 1096 (NALPTEGKIF…QEHAANLSAA (146 aa)) folds into the MGS-like domain. The allosteric domain stretch occupies residues 951 to 1102 (NALPTEGKIF…LSAAMEAANA (152 aa)).

The protein belongs to the CarB family. Composed of two chains; the small (or glutamine) chain promotes the hydrolysis of glutamine to ammonia, which is used by the large (or ammonia) chain to synthesize carbamoyl phosphate. Tetramer of heterodimers (alpha,beta)4. Mg(2+) serves as cofactor. The cofactor is Mn(2+).

The catalysed reaction is hydrogencarbonate + L-glutamine + 2 ATP + H2O = carbamoyl phosphate + L-glutamate + 2 ADP + phosphate + 2 H(+). The enzyme catalyses hydrogencarbonate + NH4(+) + 2 ATP = carbamoyl phosphate + 2 ADP + phosphate + 2 H(+). It functions in the pathway amino-acid biosynthesis; L-arginine biosynthesis; carbamoyl phosphate from bicarbonate: step 1/1. The protein operates within pyrimidine metabolism; UMP biosynthesis via de novo pathway; (S)-dihydroorotate from bicarbonate: step 1/3. Large subunit of the glutamine-dependent carbamoyl phosphate synthetase (CPSase). CPSase catalyzes the formation of carbamoyl phosphate from the ammonia moiety of glutamine, carbonate, and phosphate donated by ATP, constituting the first step of 2 biosynthetic pathways, one leading to arginine and/or urea and the other to pyrimidine nucleotides. The large subunit (synthetase) binds the substrates ammonia (free or transferred from glutamine from the small subunit), hydrogencarbonate and ATP and carries out an ATP-coupled ligase reaction, activating hydrogencarbonate by forming carboxy phosphate which reacts with ammonia to form carbamoyl phosphate. The sequence is that of Carbamoyl phosphate synthase large chain from Paenarthrobacter aurescens (strain TC1).